The chain runs to 217 residues: uncharacterized protein (217 aa).

The protein belongs to the IIV-6 309L family.

This is an uncharacterized protein from Acheta domesticus (House cricket).